The chain runs to 188 residues: dCTP deaminase (188 aa).

109 to 114 (KSTYAR) lines the dCTP pocket. Catalysis depends on E135, which acts as the Proton donor/acceptor. 3 residues coordinate dCTP: Q154, Y168, and Q178.

The protein belongs to the dCTP deaminase family. In terms of assembly, homotrimer.

It carries out the reaction dCTP + H2O + H(+) = dUTP + NH4(+). Its pathway is pyrimidine metabolism; dUMP biosynthesis; dUMP from dCTP (dUTP route): step 1/2. Functionally, catalyzes the deamination of dCTP to dUTP. The protein is dCTP deaminase of Helicobacter acinonychis (strain Sheeba).